We begin with the raw amino-acid sequence, 268 residues long: Glucosamine-6-phosphate deaminase (268 aa).

Catalysis depends on Asp72, which acts as the Proton acceptor; for enolization step. The active-site For ring-opening step is Asp141. His143 functions as the Proton acceptor; for ring-opening step in the catalytic mechanism. The active-site For ring-opening step is the Glu148.

Belongs to the glucosamine/galactosamine-6-phosphate isomerase family. NagB subfamily. As to quaternary structure, homohexamer.

The enzyme catalyses alpha-D-glucosamine 6-phosphate + H2O = beta-D-fructose 6-phosphate + NH4(+). It participates in amino-sugar metabolism; N-acetylneuraminate degradation; D-fructose 6-phosphate from N-acetylneuraminate: step 5/5. With respect to regulation, allosterically activated by N-acetylglucosamine 6-phosphate (GlcNAc6P). Functionally, catalyzes the reversible isomerization-deamination of glucosamine 6-phosphate (GlcN6P) to form fructose 6-phosphate (Fru6P) and ammonium ion. The protein is Glucosamine-6-phosphate deaminase of Proteus mirabilis (strain HI4320).